Here is a 140-residue protein sequence, read N- to C-terminus: MSKRGRGGTAGGKFRISLGLPVGAVMNCADNTGAKNLYVIAVHGIRGRLNRLPAAGVGDMFVATVKKGKPELRKKVMPAVVIRQRKPFRRRDGVFIYFEDNAGVIVNNKGEMKGSAITGPVAKECADLWPRIASNASSIA.

Belongs to the universal ribosomal protein uL14 family.

The sequence is that of Large ribosomal subunit protein uL14 (RpL23) from Drosophila melanogaster (Fruit fly).